A 241-amino-acid polypeptide reads, in one-letter code: Geranylgeranylglyceryl phosphate synthase (241 aa).

Mg(2+) contacts are provided by Asp19 and Ser46. Residues 167 to 173 (YLEAGSG), 198 to 199 (GG), and 220 to 221 (GT) contribute to the sn-glycerol 1-phosphate site.

The protein belongs to the GGGP/HepGP synthase family. Group II subfamily. The cofactor is Mg(2+).

It localises to the cytoplasm. The enzyme catalyses sn-glycerol 1-phosphate + (2E,6E,10E)-geranylgeranyl diphosphate = sn-3-O-(geranylgeranyl)glycerol 1-phosphate + diphosphate. It functions in the pathway membrane lipid metabolism; glycerophospholipid metabolism. Its function is as follows. Prenyltransferase that catalyzes the transfer of the geranylgeranyl moiety of geranylgeranyl diphosphate (GGPP) to the C3 hydroxyl of sn-glycerol-1-phosphate (G1P). This reaction is the first ether-bond-formation step in the biosynthesis of archaeal membrane lipids. This is Geranylgeranylglyceryl phosphate synthase from Pyrobaculum calidifontis (strain DSM 21063 / JCM 11548 / VA1).